A 721-amino-acid polypeptide reads, in one-letter code: YTH domain-containing protein 1 (721 aa).

A compositionally biased stretch (acidic residues) spans 29 to 38; sequence EADIAEELQD. The interval 29 to 239 is disordered; that stretch reads EADIAEELQD…GGGTHSHSQK (211 aa). Over residues 48 to 75 the composition is skewed to low complexity; it reads SESNGGDSSDSEPSISSVSTATSSLAGS. Basic and acidic residues predominate over residues 135 to 151; it reads ASDKVKSKSPDTEDRQP. The YTH domain occupies 254–391; sequence TRFFLIKSNN…KIGGELCRLF (138 aa). Residues 260–262, Trp-276, and Trp-327 contribute to the RNA site; that span reads KSN. 3 disordered regions span residues 424-471, 580-605, and 651-721; these read PPRS…RHHH, DGPG…DKAP, and AGGG…DNRR. A compositionally biased stretch (gly residues) spans 432–443; it reads GHGGGGRGGGRG. A compositionally biased stretch (basic residues) spans 451 to 471; the sequence is PMRHKRSYHGAPHHRPYRHHH. Residues 583–600 show a composition bias toward pro residues; it reads GAPPLPDYPPPQRPPPPG. A compositionally biased stretch (gly residues) spans 651-670; sequence AGGGMGAGGGSGGGMGGPGG. Residues 699–708 are compositionally biased toward basic and acidic residues; it reads RDSRPFRERG.

The protein localises to the nucleus. In terms of biological role, regulator of alternative splicing that specifically recognizes and binds N6-methyladenosine (m6A)-containing RNAs. Acts by acting as a reader of m6A methylation. Required for sex determination and dosage compensation via Sxl alternative splicing: m6A methylation acts as a key regulator of Sxl pre-mRNA and promotes female-specific alternative splicing of Sxl, which determines female physiognomy. M6A methylation is also required for neuronal functions. This Drosophila melanogaster (Fruit fly) protein is YTH domain-containing protein 1.